Consider the following 295-residue polypeptide: Taste receptor type 2 member 120 (295 aa).

Residues 1–5 lie on the Extracellular side of the membrane; the sequence is MDLTE. A helical transmembrane segment spans residues 6 to 26; the sequence is WIVTIIMMIEFLLGNCANFFI. The Cytoplasmic segment spans residues 27–45; that stretch reads MVVNAIDCMKRRKISSADR. The helical transmembrane segment at 46–66 threads the bilayer; it reads IITALAISRIGLLWAMLMNWH. The Extracellular segment spans residues 67 to 83; the sequence is SRVYTTDTYSFQVTAFS. A helical transmembrane segment spans residues 84–104; sequence GIIWAITNHFTTWLGTILSMF. The Cytoplasmic portion of the chain corresponds to 105-125; it reads YLFKIANFSNCLFLHLKRKLD. Residues 126-146 form a helical membrane-spanning segment; that stretch reads SVLLVIFLVSSLLVFAYLGVV. At 147–177 the chain is on the extracellular side; it reads NIKKIAWLSVHEGNVTVKSKLMNIASIRDTL. An N-linked (GlcNAc...) asparagine glycan is attached at N160. Residues 178–198 form a helical membrane-spanning segment; sequence LFSLINIAPFGISLTCVLLLI. The Cytoplasmic segment spans residues 199–230; that stretch reads YSLGKHLKNMKFYGKGCQDQSTMVHIRALQTV. A helical transmembrane segment spans residues 231-251; sequence VSFLLLYATYSSCVIISGWSI. Over 252 to 255 the chain is Extracellular; it reads QNVP. The chain crosses the membrane as a helical span at residues 256–276; it reads IFLFCVTIGAFYPAGHSCILI. The Cytoplasmic portion of the chain corresponds to 277-295; the sequence is WGNQKLKQFLLLFLRQMKC.

It belongs to the G-protein coupled receptor T2R family.

The protein resides in the membrane. Functionally, putative taste receptor which may play a role in the perception of bitterness. The polypeptide is Taste receptor type 2 member 120 (Rattus norvegicus (Rat)).